Consider the following 211-residue polypeptide: ATP phosphoribosyltransferase (211 aa).

Belongs to the ATP phosphoribosyltransferase family. Short subfamily. As to quaternary structure, heteromultimer composed of HisG and HisZ subunits.

The protein resides in the cytoplasm. It carries out the reaction 1-(5-phospho-beta-D-ribosyl)-ATP + diphosphate = 5-phospho-alpha-D-ribose 1-diphosphate + ATP. The protein operates within amino-acid biosynthesis; L-histidine biosynthesis; L-histidine from 5-phospho-alpha-D-ribose 1-diphosphate: step 1/9. In terms of biological role, catalyzes the condensation of ATP and 5-phosphoribose 1-diphosphate to form N'-(5'-phosphoribosyl)-ATP (PR-ATP). Has a crucial role in the pathway because the rate of histidine biosynthesis seems to be controlled primarily by regulation of HisG enzymatic activity. The protein is ATP phosphoribosyltransferase of Bacillus cereus (strain G9842).